A 525-amino-acid chain; its full sequence is GMP synthase [glutamine-hydrolyzing] (525 aa).

The region spanning 9–207 is the Glutamine amidotransferase type-1 domain; it reads RILILDFGSQ…VHEICGCPAD (199 aa). The active-site Nucleophile is the cysteine 86. Residues histidine 181 and glutamate 183 contribute to the active site. The region spanning 208 to 400 is the GMPS ATP-PPase domain; sequence WTPGNIVDDL…LGLPADMVYR (193 aa). Residue 235–241 coordinates ATP; it reads SGGVDSS.

As to quaternary structure, homodimer.

The enzyme catalyses XMP + L-glutamine + ATP + H2O = GMP + L-glutamate + AMP + diphosphate + 2 H(+). It participates in purine metabolism; GMP biosynthesis; GMP from XMP (L-Gln route): step 1/1. Catalyzes the synthesis of GMP from XMP. In Alkalilimnicola ehrlichii (strain ATCC BAA-1101 / DSM 17681 / MLHE-1), this protein is GMP synthase [glutamine-hydrolyzing].